Consider the following 91-residue polypeptide: Ragulator complex protein LAMTOR5 (91 aa).

Methionine 1 is subject to N-acetylmethionine.

This sequence belongs to the LAMTOR5 family. Homodimer. Part of the Ragulator complex composed of LAMTOR1, LAMTOR2, LAMTOR3, LAMTOR4 and LAMTOR5. LAMTOR4 and LAMTOR5 form a heterodimer that interacts, through LAMTOR1, with a LAMTOR2, LAMTOR3 heterodimer. The Ragulator complex interacts with both the mTORC1 complex and heterodimers constituted of the Rag GTPases RagA/RRAGA, RagB/RRAGB, RagC/RRAGC and RagD/RRAGD; regulated by amino acid availability. The Ragulator complex interacts with SLC38A9; the probable amino acid sensor. Component of the lysosomal folliculin complex (LFC), composed of FLCN, FNIP1 (or FNIP2), RagA/RRAGA or RagB/RRAGB GDP-bound, RagC/RRAGC or RagD/RRAGD GTP-bound, and Ragulator. Interacts with phosphorylated BIRC5; the resulting complex binds pro-caspase-9, as well as active caspase-9, but much less efficiently. Interacts with SUPV3L1.

It localises to the lysosome. Its subcellular location is the cytoplasm. The protein localises to the cytosol. Its function is as follows. As part of the Ragulator complex it is involved in amino acid sensing and activation of mTORC1, a signaling complex promoting cell growth in response to growth factors, energy levels, and amino acids. Activated by amino acids through a mechanism involving the lysosomal V-ATPase, the Ragulator plays a dual role for the small GTPases Rag (RagA/RRAGA, RagB/RRAGB, RagC/RRAGC and/or RagD/RRAGD): it (1) acts as a guanine nucleotide exchange factor (GEF), activating the small GTPases Rag and (2) mediates recruitment of Rag GTPases to the lysosome membrane. Activated Ragulator and Rag GTPases function as a scaffold recruiting mTORC1 to lysosomes where it is in turn activated. When complexed to BIRC5, interferes with apoptosome assembly, preventing recruitment of pro-caspase-9 to oligomerized APAF1, thereby selectively suppressing apoptosis initiated via the mitochondrial/cytochrome c pathway. In Bos taurus (Bovine), this protein is Ragulator complex protein LAMTOR5 (LAMTOR5).